A 359-amino-acid chain; its full sequence is Phospho-N-acetylmuramoyl-pentapeptide-transferase (359 aa).

The next 10 helical transmembrane spans lie at 7–27 (RSLT…VNSY), 28–48 (IFNS…SLVI), 82–102 (MGGI…NNYV), 103–123 (DSVG…IGFL), 147–167 (ALIA…NPLI), 179–199 (IVIF…VNLT), 203–223 (DGLA…EIFI), 229–249 (LIIY…FLKY), 256–276 (IFMG…ISIL), and 337–357 (IVEN…VLKI).

It belongs to the glycosyltransferase 4 family. MraY subfamily. The cofactor is Mg(2+).

Its subcellular location is the cell inner membrane. The catalysed reaction is UDP-N-acetyl-alpha-D-muramoyl-L-alanyl-gamma-D-glutamyl-meso-2,6-diaminopimeloyl-D-alanyl-D-alanine + di-trans,octa-cis-undecaprenyl phosphate = di-trans,octa-cis-undecaprenyl diphospho-N-acetyl-alpha-D-muramoyl-L-alanyl-D-glutamyl-meso-2,6-diaminopimeloyl-D-alanyl-D-alanine + UMP. It functions in the pathway cell wall biogenesis; peptidoglycan biosynthesis. Functionally, catalyzes the initial step of the lipid cycle reactions in the biosynthesis of the cell wall peptidoglycan: transfers peptidoglycan precursor phospho-MurNAc-pentapeptide from UDP-MurNAc-pentapeptide onto the lipid carrier undecaprenyl phosphate, yielding undecaprenyl-pyrophosphoryl-MurNAc-pentapeptide, known as lipid I. The chain is Phospho-N-acetylmuramoyl-pentapeptide-transferase from Prochlorococcus marinus subsp. pastoris (strain CCMP1986 / NIES-2087 / MED4).